The chain runs to 218 residues: Small ribosomal subunit protein uS3c (218 aa).

The KH type-2 domain occupies 43–118; the sequence is IKNYVQKNMK…KLNISITRIE (76 aa).

This sequence belongs to the universal ribosomal protein uS3 family. Part of the 30S ribosomal subunit.

The protein localises to the plastid. It is found in the chloroplast. The polypeptide is Small ribosomal subunit protein uS3c (rps3) (Populus trichocarpa (Western balsam poplar)).